The primary structure comprises 270 residues: Protein-ADP-ribose hydrolase (270 aa).

A Macro domain is found at 73 to 267 (VSVKDCQKTN…LYDTYLQKEN (195 aa)). Positions 92, 93, and 106 each coordinate ADP-D-ribose. Residues Cys112, His117, and Cys119 each contribute to the Zn(2+) site. Positions 119, 120, 121, 212, 213, 214, 215, and 216 each coordinate ADP-D-ribose.

This sequence belongs to the MacroD-type family. Zn-Macro subfamily. Requires Zn(2+) as cofactor.

It catalyses the reaction 4-O-(ADP-D-ribosyl)-L-aspartyl-[protein] + H2O = L-aspartyl-[protein] + ADP-D-ribose + H(+). Functionally, ADP-ribosylhydrolase that specifically reverses the SirTM-mediated mono-ADP-ribosylation at an asparatate residue of GcvH-L, by releasing ADP-ribose from the target protein. May play a role in the regulation of the response to host-induced oxidative stress. This is Protein-ADP-ribose hydrolase from Streptococcus pyogenes serotype M6 (strain ATCC BAA-946 / MGAS10394).